Here is a 141-residue protein sequence, read N- to C-terminus: Hemoglobin subunit alpha-A (141 aa).

In terms of domain architecture, Globin spans 1-141 (MLSASDKANV…VGLVLTAKYR (141 aa)). An O2-binding site is contributed by histidine 58. Position 87 (histidine 87) interacts with heme b.

Belongs to the globin family. In terms of assembly, there are three forms of hemoglobin in Sphenodon: A, A' and D. Hb A is a tetramer of two alpha-A and two beta-1, Hb A' is a tetramer of two alpha-a and two beta-2, Hb D is a tetramer of two alpha-D and two beta-2. In terms of tissue distribution, red blood cells.

In terms of biological role, involved in oxygen transport from the lung to the various peripheral tissues. The polypeptide is Hemoglobin subunit alpha-A (HBAA) (Sphenodon punctatus (Tuatara)).